Reading from the N-terminus, the 178-residue chain is ATP synthase subunit delta (178 aa).

This sequence belongs to the ATPase delta chain family. In terms of assembly, F-type ATPases have 2 components, F(1) - the catalytic core - and F(0) - the membrane proton channel. F(1) has five subunits: alpha(3), beta(3), gamma(1), delta(1), epsilon(1). F(0) has three main subunits: a(1), b(2) and c(10-14). The alpha and beta chains form an alternating ring which encloses part of the gamma chain. F(1) is attached to F(0) by a central stalk formed by the gamma and epsilon chains, while a peripheral stalk is formed by the delta and b chains.

It is found in the cell membrane. In terms of biological role, f(1)F(0) ATP synthase produces ATP from ADP in the presence of a proton or sodium gradient. F-type ATPases consist of two structural domains, F(1) containing the extramembraneous catalytic core and F(0) containing the membrane proton channel, linked together by a central stalk and a peripheral stalk. During catalysis, ATP synthesis in the catalytic domain of F(1) is coupled via a rotary mechanism of the central stalk subunits to proton translocation. Functionally, this protein is part of the stalk that links CF(0) to CF(1). It either transmits conformational changes from CF(0) to CF(1) or is implicated in proton conduction. This chain is ATP synthase subunit delta, found in Geobacillus stearothermophilus (Bacillus stearothermophilus).